A 395-amino-acid polypeptide reads, in one-letter code: Chalcone synthase 7 (395 aa).

The active site involves cysteine 169.

The protein belongs to the thiolase-like superfamily. Chalcone/stilbene synthases family.

The catalysed reaction is (E)-4-coumaroyl-CoA + 3 malonyl-CoA + 3 H(+) = 2',4,4',6'-tetrahydroxychalcone + 3 CO2 + 4 CoA. It functions in the pathway secondary metabolite biosynthesis; flavonoid biosynthesis. In terms of biological role, the primary product of this enzyme is 4,2',4',6'-tetrahydroxychalcone (also termed naringenin-chalcone or chalcone) which can under specific conditions spontaneously isomerize into naringenin. This chain is Chalcone synthase 7 (CSF7), found in Picea mariana (Black spruce).